The sequence spans 773 residues: Leucine-rich repeat and calponin homology domain-containing protein 2 (773 aa).

The segment at 1-46 is disordered; sequence MAASQGGGGNSGGGGCSGGGSGGGGGAAGGGGGGGGGGGGGAGAGG. 9 LRR repeats span residues 97–118, 120–141, 143–164, 166–187, 188–209, 211–232, 234–256, 257–277, and 279–300; these read NSGILSLSGRKLREFPGSGYDL, DTTQADLSRNRFTEIPSDVWLF, PLETLNLYHNCIKTIPEAIKNL, MLTYLNISRNLLSTLPKYLFDL, PLKVLVVSNNKLVSIPEEIGKL, DLMELDVSCNEIQVLPQQMGKL, SLKELNIRRNNLHVLPDELGDLP, LVKLDFSCNKVTEIPVCYRKL, and HLQVIILDNNPLQVPPAQICLK. 3 disordered regions span residues 324–409, 438–478, and 573–633; these read LDLP…QKDQ, FLKG…LKEV, and KYKS…SRQE. 2 stretches are compositionally biased toward basic and acidic residues: residues 386–396 and 440–466; these read SNREQTSRNDS and KGKEKSSEKSQKNEEPPNEKKVDKEQL. Residues 594 to 603 show a composition bias toward polar residues; the sequence is AHMSAQSPVS. The Calponin-homology (CH) domain occupies 650 to 763; the sequence is LREEREQIRQ…VTVQALLELP (114 aa).

May play a role in the organization of the cytoskeleton. This is Leucine-rich repeat and calponin homology domain-containing protein 2 (Lrch2) from Mus musculus (Mouse).